The sequence spans 169 residues: Peptide deformylase (169 aa).

The Fe cation site is built by cysteine 91 and histidine 133. Glutamate 134 is an active-site residue. Histidine 137 is a Fe cation binding site.

This sequence belongs to the polypeptide deformylase family. Requires Fe(2+) as cofactor.

The catalysed reaction is N-terminal N-formyl-L-methionyl-[peptide] + H2O = N-terminal L-methionyl-[peptide] + formate. Its function is as follows. Removes the formyl group from the N-terminal Met of newly synthesized proteins. Requires at least a dipeptide for an efficient rate of reaction. N-terminal L-methionine is a prerequisite for activity but the enzyme has broad specificity at other positions. The chain is Peptide deformylase from Salmonella typhi.